The following is a 1871-amino-acid chain: Plexin-A3 (1871 aa).

Residues 1–19 form the signal peptide; sequence MPSVCLLLLLFLAVGGALG. The 469-residue stretch at 20–488 folds into the Sema domain; that stretch reads NRPFRAFVVT…SEKQVSQLPV (469 aa). The Extracellular segment spans residues 20–1220; that stretch reads NRPFRAFVVT…SAERALTLPA (1201 aa). An N-linked (GlcNAc...) asparagine glycan is attached at N59. 9 disulfide bridges follow: C77–C86, C112–C120, C266–C387, C282–C338, C356–C375, C491–C508, C497–C539, C500–C517, and C511–C523. N-linked (GlcNAc...) asparagine glycosylation is present at N548. A disulfide bridge connects residues C574 and C594. Residues N637, N738, and N746 are each glycosylated (N-linked (GlcNAc...) asparagine). IPT/TIG domains are found at residues 840–933, 935–1020, 1023–1122, and 1125–1211; these read PRIT…YSFV, PTFD…YTYT, PTVT…FTYY, and PSFE…LHIS. 5 N-linked (GlcNAc...) asparagine glycosylation sites follow: N1009, N1036, N1073, N1115, and N1162. A helical transmembrane segment spans residues 1221–1241; that stretch reads MMGLAAGGGLLLLAITAVLVA. At 1242 to 1871 the chain is on the cytoplasmic side; it reads YKRKTQDADR…QIISLVSSDS (630 aa). S1596 is subject to Phosphoserine.

It belongs to the plexin family. As to quaternary structure, interacts with CBFA2T3/MTG16.

Its subcellular location is the cell membrane. Functionally, coreceptor for SEMA3A and SEMA3F. Necessary for signaling by class 3 semaphorins and subsequent remodeling of the cytoskeleton. Plays a role in axon guidance in the developing nervous system. Regulates the migration of sympathetic neurons, but not of neural crest precursors. Required for normal dendrite spine morphology in pyramidal neurons. May play a role in regulating semaphorin-mediated programmed cell death in the developing nervous system. Class 3 semaphorins bind to a complex composed of a neuropilin and a plexin. The plexin modulates the affinity of the complex for specific semaphorins, and its cytoplasmic domain is required for the activation of down-stream signaling events in the cytoplasm. In Homo sapiens (Human), this protein is Plexin-A3 (PLXNA3).